Reading from the N-terminus, the 265-residue chain is 2-amino-3,7-dideoxy-D-threo-hept-6-ulosonate synthase (265 aa).

Asp-25 functions as the Proton acceptor in the catalytic mechanism. 1-deoxy-D-threo-hexo-2,5-diulose 6-phosphate contacts are provided by residues 25–29 (DHGIT) and 144–146 (YAR). Catalysis depends on Tyr-144, which acts as the Proton donor. Lys-174 acts as the Schiff-base intermediate with substrate in catalysis. Residues 199-200 (GG) and 226-227 (GR) each bind 1-deoxy-D-threo-hexo-2,5-diulose 6-phosphate.

The protein belongs to the DeoC/FbaB aldolase family. ADHS subfamily. Homodecamer.

It carries out the reaction 1-deoxy-D-threo-hexo-2,5-diulose 6-phosphate + L-aspartate 4-semialdehyde = 2,3-dioxopropyl phosphate + 2-amino-2,3,7-trideoxy-D-lyxo-hept-6-ulosonate. Its function is as follows. Catalyzes a transaldol reaction between 6-deoxy-5-ketofructose 1-phosphate (DKFP) and L-aspartate semialdehyde (ASA) with an elimination of hydroxypyruvaldehyde phosphate to yield 2-amino-3,7-dideoxy-D-threo-hept-6-ulosonate (ADH). Plays a key role in an alternative pathway of the biosynthesis of 3-dehydroquinate (DHQ), which is involved in the canonical pathway for the biosynthesis of aromatic amino acids. This chain is 2-amino-3,7-dideoxy-D-threo-hept-6-ulosonate synthase, found in Halobacterium salinarum (strain ATCC 700922 / JCM 11081 / NRC-1) (Halobacterium halobium).